The chain runs to 47 residues: ATP-dependent zinc metalloprotease FTSH, chloroplastic (47 aa).

This sequence in the N-terminal section; belongs to the AAA ATPase family. The protein in the C-terminal section; belongs to the peptidase M41 family. The cofactor is Zn(2+).

The protein resides in the plastid. It is found in the chloroplast membrane. Seems to act as an ATP-dependent zinc metallopeptidase. The chain is ATP-dependent zinc metalloprotease FTSH, chloroplastic from Populus euphratica (Euphrates poplar).